A 316-amino-acid polypeptide reads, in one-letter code: Cell division protein ZipA (316 aa).

Topologically, residues 1-5 (MQELR) are periplasmic. Residues 6–26 (FVLIVVGALAIAALLFHGLWS) traverse the membrane as a helical segment. Over 27–316 (SKKEGKAKFG…QIVEFNAANA (290 aa)) the chain is Cytoplasmic. Residues 36–65 (GNKPLGKLDVDQGDKDSVEQERSFAPATED) form a disordered region. Residues 41–57 (GKLDVDQGDKDSVEQER) are compositionally biased toward basic and acidic residues.

This sequence belongs to the ZipA family. Interacts with FtsZ via their C-terminal domains.

The protein localises to the cell inner membrane. In terms of biological role, essential cell division protein that stabilizes the FtsZ protofilaments by cross-linking them and that serves as a cytoplasmic membrane anchor for the Z ring. Also required for the recruitment to the septal ring of downstream cell division proteins. The chain is Cell division protein ZipA from Vibrio parahaemolyticus serotype O3:K6 (strain RIMD 2210633).